A 339-amino-acid chain; its full sequence is DNA-directed RNA polymerase subunit alpha (339 aa).

The segment at 1–233 (MVREEVAGST…DLFLPFLHAE (233 aa)) is alpha N-terminal domain (alpha-NTD). The alpha C-terminal domain (alpha-CTD) stretch occupies residues 264-339 (KKGIPLNCIF…IDLLKNKLSF (76 aa)).

The protein belongs to the RNA polymerase alpha chain family. In plastids the minimal PEP RNA polymerase catalytic core is composed of four subunits: alpha, beta, beta', and beta''. When a (nuclear-encoded) sigma factor is associated with the core the holoenzyme is formed, which can initiate transcription.

It localises to the plastid. Its subcellular location is the chloroplast. It catalyses the reaction RNA(n) + a ribonucleoside 5'-triphosphate = RNA(n+1) + diphosphate. Its function is as follows. DNA-dependent RNA polymerase catalyzes the transcription of DNA into RNA using the four ribonucleoside triphosphates as substrates. This is DNA-directed RNA polymerase subunit alpha from Festucopsis festucoides.